Here is a 39-residue protein sequence, read N- to C-terminus: Cytochrome b559 subunit beta (39 aa).

A helical transmembrane segment spans residues 14–30 (WLAVHGLAVPTVFFLGS). His-18 is a heme binding site.

It belongs to the PsbE/PsbF family. In terms of assembly, heterodimer of an alpha subunit and a beta subunit. PSII is composed of 1 copy each of membrane proteins PsbA, PsbB, PsbC, PsbD, PsbE, PsbF, PsbH, PsbI, PsbJ, PsbK, PsbL, PsbM, PsbT, PsbX, PsbY, PsbZ, Psb30/Ycf12, at least 3 peripheral proteins of the oxygen-evolving complex and a large number of cofactors. It forms dimeric complexes. Heme b serves as cofactor.

It is found in the plastid. The protein resides in the chloroplast thylakoid membrane. This b-type cytochrome is tightly associated with the reaction center of photosystem II (PSII). PSII is a light-driven water:plastoquinone oxidoreductase that uses light energy to abstract electrons from H(2)O, generating O(2) and a proton gradient subsequently used for ATP formation. It consists of a core antenna complex that captures photons, and an electron transfer chain that converts photonic excitation into a charge separation. The protein is Cytochrome b559 subunit beta of Cedrus deodara (Deodar cedar).